The chain runs to 133 residues: uncharacterized protein (133 aa).

This is an uncharacterized protein from Homo sapiens (Human).